A 189-amino-acid polypeptide reads, in one-letter code: uncharacterized protein (189 aa).

Residues 1-23 form the signal peptide; sequence MIKTTPHKIVILMGILLSPSVFA. Residues 104–125 form a disordered region; it reads SSPKLIIPQSGDSSSTTSNIGM. Residues 113-123 are compositionally biased toward polar residues; the sequence is SGDSSSTTSNI.

Belongs to the fimbrial protein family.

It localises to the fimbrium. In terms of biological role, part of the yadCKLM-htrE-yadVN fimbrial operon. Could contribute to adhesion to various surfaces in specific environmental niches. This is an uncharacterized protein from Escherichia coli (strain K12).